A 297-amino-acid polypeptide reads, in one-letter code: tRNA pseudouridine synthase B (297 aa).

The Nucleophile role is filled by aspartate 44.

Belongs to the pseudouridine synthase TruB family. Type 1 subfamily.

It catalyses the reaction uridine(55) in tRNA = pseudouridine(55) in tRNA. Its function is as follows. Responsible for synthesis of pseudouridine from uracil-55 in the psi GC loop of transfer RNAs. The protein is tRNA pseudouridine synthase B of Corynebacterium glutamicum (strain ATCC 13032 / DSM 20300 / JCM 1318 / BCRC 11384 / CCUG 27702 / LMG 3730 / NBRC 12168 / NCIMB 10025 / NRRL B-2784 / 534).